A 346-amino-acid polypeptide reads, in one-letter code: Uricase (346 aa).

The interval 1–23 is disordered; sequence MFATPLRQPTNASGARPAVSMDG. Catalysis depends on charge relay system residues lysine 39 and threonine 84. Positions 84, 85, 208, 225, 273, 274, and 300 each coordinate urate. The Charge relay system role is filled by histidine 302. Positions 344–346 match the Microbody targeting signal motif; that stretch reads SHL.

Belongs to the uricase family. Malpighian tubules.

The protein localises to the peroxisome. The enzyme catalyses urate + O2 + H2O = 5-hydroxyisourate + H2O2. The protein operates within purine metabolism; urate degradation; (S)-allantoin from urate: step 1/3. Its activity is regulated as follows. Repressed by 20-hydroxyecdysone. Its function is as follows. Catalyzes the oxidation of uric acid to 5-hydroxyisourate, which is further processed to form (S)-allantoin. The polypeptide is Uricase (Uro) (Drosophila pseudoobscura pseudoobscura (Fruit fly)).